A 99-amino-acid chain; its full sequence is Transcription factor 1 (99 aa).

May be involved in preference for HM-URA DNA regions lie at residues Pro-52 to Val-77 and Glu-90 to Lys-99. 2 consecutive DNA-binding regions follow at residues Phe-61 and Lys-93–Tyr-94.

Belongs to the bacterial histone-like protein family. In terms of assembly, homodimer.

In terms of biological role, selectively binds to and inhibits the transcription of hydroxymethyluracil-(hmUra)-containing DNA, such as SP01 DNA, by RNA polymerase in vitro. The protein is Transcription factor 1 (TF1) of Bacillus phage SP01 (Bacteriophage SP01).